The primary structure comprises 448 residues: UPF0210 protein Pars_1033 (448 aa).

This sequence belongs to the UPF0210 family.

The sequence is that of UPF0210 protein Pars_1033 from Pyrobaculum arsenaticum (strain DSM 13514 / JCM 11321 / PZ6).